The sequence spans 225 residues: UPF0758 protein swp_2203 (225 aa).

An MPN domain is found at 102-224 (ILSDPDLTRD…IVSFAERGWI (123 aa)). Positions 173, 175, and 186 each coordinate Zn(2+). Positions 173–186 (HNHPSGIAEPSTAD) match the JAMM motif motif.

The protein belongs to the UPF0758 family.

The polypeptide is UPF0758 protein swp_2203 (Shewanella piezotolerans (strain WP3 / JCM 13877)).